We begin with the raw amino-acid sequence, 90 residues long: UPF0298 protein BLi01717/BL02989 (90 aa).

Belongs to the UPF0298 family.

It is found in the cytoplasm. The chain is UPF0298 protein BLi01717/BL02989 from Bacillus licheniformis (strain ATCC 14580 / DSM 13 / JCM 2505 / CCUG 7422 / NBRC 12200 / NCIMB 9375 / NCTC 10341 / NRRL NRS-1264 / Gibson 46).